The chain runs to 454 residues: MASLNENQKFWARVTELARQSIGKQAYDFFIEPAQLMSVEQDTANILLDSGMKKDYWKKQSDLITTAGFEVFGRMIDYELYANDELTDIELRRLNNQSPVDEPLSVAKPTSPLVSGLNEKYNFENFVQGPGNRWTLAAAIAVADKPGDTYNPLFIYGGAGLGKTHLMHAIGNQILTDNPTARIKYVSSENFVNDYVNATRKNQMESFENTYRNLDLLLLDDVQFFSDKEGTKNEFFNTFNALYDKGSQIVLTSDRIPQELNNLEDRLVSRFSWGLTTDITAPDYETRMAILLIKSESSHLEFPSETLSYIAGQIDSNVRELEGALNRVEFVARANGISIVDIETASQALRSLKNATQQSLSNLTIKKIQDEVANYYHISFSDLVGPKRPKEIAFPRQIAMYLVRELLGTSLPAIGTAFGGRDHTTVMYAYKQISDKMKNDMDVQKDIDSIKRKF.

The interval 1-77 (MASLNENQKF…GFEVFGRMID (77 aa)) is domain I, interacts with DnaA modulators. The domain II stretch occupies residues 77–115 (DYELYANDELTDIELRRLNNQSPVDEPLSVAKPTSPLVS). The domain III, AAA+ region stretch occupies residues 116-332 (GLNEKYNFEN…GALNRVEFVA (217 aa)). Glycine 160, glycine 162, lysine 163, and threonine 164 together coordinate ATP. The tract at residues 333–454 (RANGISIVDI…KDIDSIKRKF (122 aa)) is domain IV, binds dsDNA.

Belongs to the DnaA family. Oligomerizes as a right-handed, spiral filament on DNA at oriC.

It is found in the cytoplasm. Plays an essential role in the initiation and regulation of chromosomal replication. ATP-DnaA binds to the origin of replication (oriC) to initiate formation of the DNA replication initiation complex once per cell cycle. Binds the DnaA box (a 9 base pair repeat at the origin) and separates the double-stranded (ds)DNA. Forms a right-handed helical filament on oriC DNA; dsDNA binds to the exterior of the filament while single-stranded (ss)DNA is stabiized in the filament's interior. The ATP-DnaA-oriC complex binds and stabilizes one strand of the AT-rich DNA unwinding element (DUE), permitting loading of DNA polymerase. After initiation quickly degrades to an ADP-DnaA complex that is not apt for DNA replication. Binds acidic phospholipids. This Lactococcus lactis subsp. cremoris (strain MG1363) protein is Chromosomal replication initiator protein DnaA.